The following is a 344-amino-acid chain: Methionine import ATP-binding protein MetN (344 aa).

Residues 2 to 241 enclose the ABC transporter domain; the sequence is IEIKSVNKVF…PKTELAHQFI (240 aa). Residue 38–45 coordinates ATP; sequence GSSGAGKS.

It belongs to the ABC transporter superfamily. Methionine importer (TC 3.A.1.24) family. In terms of assembly, the complex is composed of two ATP-binding proteins (MetN), two transmembrane proteins (MetI) and a solute-binding protein (MetQ).

It is found in the cell inner membrane. It catalyses the reaction L-methionine(out) + ATP + H2O = L-methionine(in) + ADP + phosphate + H(+). The catalysed reaction is D-methionine(out) + ATP + H2O = D-methionine(in) + ADP + phosphate + H(+). In terms of biological role, part of the ABC transporter complex MetNIQ involved in methionine import. Responsible for energy coupling to the transport system. In Vibrio cholerae serotype O1 (strain ATCC 39315 / El Tor Inaba N16961), this protein is Methionine import ATP-binding protein MetN.